A 939-amino-acid chain; its full sequence is AP-2 complex subunit alpha (939 aa).

A compositionally biased stretch (basic and acidic residues) spans R623 to K633. Positions R623–N660 are disordered. Positions P635–N660 are enriched in polar residues.

It belongs to the adapter complexes large subunit family. Adaptor protein complex 2 (AP-2) is a heterotetramer composed of two large adaptins (alpha-type and beta-type subunits), a medium adaptin (mu-type subunit AP50) and a small adaptin (sigma-type subunit AP17).

Its subcellular location is the cell membrane. The protein resides in the membrane. It localises to the coated pit. Adaptins are components of the adapter complexes which link clathrin to receptors in coated vesicles. Clathrin-associated protein complexes are believed to interact with the cytoplasmic tails of membrane proteins, leading to their selection and concentration. Alpha adaptin is a subunit of the plasma membrane adapter. The polypeptide is AP-2 complex subunit alpha (Drosophila pseudoobscura pseudoobscura (Fruit fly)).